Here is a 428-residue protein sequence, read N- to C-terminus: D-alanine--D-alanine ligase (428 aa).

One can recognise an ATP-grasp domain in the interval 205–424 (KVVLDAAGIP…YTELITRLIE (220 aa)). ATP is bound at residue 237-299 (DAGLTYPLFV…EQGIDGREIE (63 aa)). Mg(2+) contacts are provided by D378, E391, and N393.

Belongs to the D-alanine--D-alanine ligase family. Requires Mg(2+) as cofactor. Mn(2+) is required as a cofactor.

It localises to the cytoplasm. It catalyses the reaction 2 D-alanine + ATP = D-alanyl-D-alanine + ADP + phosphate + H(+). It functions in the pathway cell wall biogenesis; peptidoglycan biosynthesis. Functionally, cell wall formation. This is D-alanine--D-alanine ligase from Bifidobacterium longum (strain NCC 2705).